The primary structure comprises 441 residues: GTPase Der (441 aa).

2 EngA-type G domains span residues Pro-4–Ile-168 and Ile-177–Ser-352. GTP contacts are provided by residues Gly-10–Ser-17, Asp-57–Ile-61, Asn-121–Glu-124, Gly-183–Ser-190, Asp-230–Met-234, and Asn-295–Asp-298. Residues Thr-353–Asp-437 form the KH-like domain.

The protein belongs to the TRAFAC class TrmE-Era-EngA-EngB-Septin-like GTPase superfamily. EngA (Der) GTPase family. Associates with the 50S ribosomal subunit.

GTPase that plays an essential role in the late steps of ribosome biogenesis. This Desulfitobacterium hafniense (strain DSM 10664 / DCB-2) protein is GTPase Der.